The following is a 2581-amino-acid chain: Highly reducing polyketide synthase sorA (2581 aa).

In terms of domain architecture, Ketosynthase family 3 (KS3) spans 14-436 (SEPIAIIGMS…GSNAHIILED (423 aa)). Catalysis depends on for beta-ketoacyl synthase activity residues cysteine 187, histidine 322, and histidine 359. The interval 574–868 (VFTGQGAQWN…VVEVGPHTAL (295 aa)) is malonyl-CoA:ACP transacylase (MAT) domain. Positions 966-1103 (HDLLGSIVEG…GLVSVELGES (138 aa)) are N-terminal hotdog fold. Residues 966–1270 (HDLLGSIVEG…GFSYQSLGRS (305 aa)) are dehydratase (DH) domain. The PKS/mFAS DH domain occupies 966–1273 (HDLLGSIVEG…YQSLGRSTSL (308 aa)). The active-site Proton acceptor; for dehydratase activity is the histidine 998. Positions 1119-1273 (TRRILPADLF…YQSLGRSTSL (155 aa)) are C-terminal hotdog fold. Aspartate 1184 acts as the Proton donor; for dehydratase activity in catalysis. A methyltransferase (CMet) domain region spans residues 1461 to 1568 (LEVGAATGAI…SSLLKPGGTL (108 aa)). An enoyl reductase (ER)domain region spans residues 1873–2184 (LKPDLLVFGD…AGDQIGKVVL (312 aa)). The ketoreductase (KR) domain stretch occupies residues 2207-2389 (VSYLIVGGSG…AVSIDLSVVN (183 aa)). The region spanning 2497–2574 (DAVRVVGTAI…QLAIDVVDRS (78 aa)) is the Carrier domain. Serine 2534 is subject to O-(pantetheine 4'-phosphoryl)serine.

It participates in secondary metabolite biosynthesis. In terms of biological role, highly reducing polyketide synthase; part of the gene cluster that mediates the biosynthesis of sorbicillinoids, a diverse group of yellow secondary metabolites that restrict growth of competing pathogenic fungi but not of bacteria. Sorbicillinoids biosynthesis requires the action of two PKSs. SorA iteratively combines three acetyl units and the growing chain is modified by the ketoacyl reductase subunit, and optional by the enoyl reductase subunit in the second cycle. The polyketide is then handed over to the PKS SorB, which adds three more acetyl units, and two methyl groups. SorB releases an aldehyde, which undergoes spontaneous cyclization resulting in the formation of sorbicillin or 2',3'-dihydrosorbicillin. The monooxygenase sorC oxidizes sorbicillin and 2',3'-dihydrosorbicillin to 2',3'-dihydrosorbicillinol and sorbicillinol, respectively. The oxidoreductase sorD further converts sorbicillinol into oxosorbicillinol. Sorbicillinol is the building block for the other sorbicillinoids such as disorbicillinol, bisvertinolon, and dihydrobisvertinolone. The chain is Highly reducing polyketide synthase sorA from Penicillium rubens (strain ATCC 28089 / DSM 1075 / NRRL 1951 / Wisconsin 54-1255) (Penicillium chrysogenum).